The primary structure comprises 75 residues: UPF0235 protein MSMEG_3845 (75 aa).

It belongs to the UPF0235 family.

This Mycolicibacterium smegmatis (strain ATCC 700084 / mc(2)155) (Mycobacterium smegmatis) protein is UPF0235 protein MSMEG_3845.